The chain runs to 342 residues: Flavanone 3-dioxygenase 2 (342 aa).

Residues 193 to 293 (QEQHMAVNYY…RMSVASFLCP (101 aa)) enclose the Fe2OG dioxygenase domain. 3 residues coordinate Fe cation: His217, Asp219, and His274. Arg284 is a binding site for 2-oxoglutarate.

Belongs to the iron/ascorbate-dependent oxidoreductase family. Fe(2+) serves as cofactor. It depends on L-ascorbate as a cofactor. As to expression, expressed in roots, leaves and stems. Expressed at low levels in seeds.

The enzyme catalyses a (2S)-flavan-4-one + 2-oxoglutarate + O2 = a (2R,3R)-dihydroflavonol + succinate + CO2. It participates in secondary metabolite biosynthesis; flavonoid biosynthesis. In terms of biological role, catalyzes the 3-beta-hydroxylation of 2S-flavanones to 2R,3R-dihydroflavonols which are intermediates in the biosynthesis of flavonols, anthocyanidins, catechins and proanthocyanidins in plants. Converts (2S)-eriodictyol to (+)-taxifolin and (2S)-naringenin to (+)-(2R/3R)-dihydrokaempferol in vitro. The protein is Flavanone 3-dioxygenase 2 of Oryza sativa subsp. japonica (Rice).